A 364-amino-acid chain; its full sequence is Dual-specificity RNA methyltransferase RlmN (364 aa).

E91 acts as the Proton acceptor in catalysis. One can recognise a Radical SAM core domain in the interval 97–333 (ESDRGTLCIS…VTVRKTRGDD (237 aa)). C104 and C338 are joined by a disulfide. [4Fe-4S] cluster is bound by residues C111, C115, and C118. S-adenosyl-L-methionine-binding positions include 164–165 (GE), S196, 218–220 (SLH), and N295. C338 (S-methylcysteine intermediate) is an active-site residue.

The protein belongs to the radical SAM superfamily. RlmN family. [4Fe-4S] cluster is required as a cofactor.

It localises to the cytoplasm. The enzyme catalyses adenosine(2503) in 23S rRNA + 2 reduced [2Fe-2S]-[ferredoxin] + 2 S-adenosyl-L-methionine = 2-methyladenosine(2503) in 23S rRNA + 5'-deoxyadenosine + L-methionine + 2 oxidized [2Fe-2S]-[ferredoxin] + S-adenosyl-L-homocysteine. It catalyses the reaction adenosine(37) in tRNA + 2 reduced [2Fe-2S]-[ferredoxin] + 2 S-adenosyl-L-methionine = 2-methyladenosine(37) in tRNA + 5'-deoxyadenosine + L-methionine + 2 oxidized [2Fe-2S]-[ferredoxin] + S-adenosyl-L-homocysteine. Specifically methylates position 2 of adenine 2503 in 23S rRNA and position 2 of adenine 37 in tRNAs. m2A2503 modification seems to play a crucial role in the proofreading step occurring at the peptidyl transferase center and thus would serve to optimize ribosomal fidelity. This chain is Dual-specificity RNA methyltransferase RlmN, found in Neisseria meningitidis serogroup B (strain ATCC BAA-335 / MC58).